The following is a 347-amino-acid chain: Isocitrate dehydrogenase [NAD] subunit alpha, mitochondrial (347 aa).

The N-terminal 8 residues, 1–8, are a transit peptide targeting the mitochondrion; that stretch reads QKQVTRGF. NAD(+) is bound at residue 14 to 42; it reads TVTLIPGDGIGPEISAAVMKIFDAAKAPI. Residue lysine 58 is modified to N6-succinyllysine. The residue at position 82 (threonine 82) is a Phosphothreonine. Substrate-binding residues include arginine 96, arginine 106, and arginine 127. Lysine 204 carries the post-translational modification N6-acetyllysine. The Mg(2+) site is built by aspartate 214, aspartate 238, and aspartate 242. Residue lysine 324 is modified to N6-acetyllysine; alternate. N6-succinyllysine; alternate is present on lysine 324. The residue at position 331 (lysine 331) is an N6-succinyllysine.

The protein belongs to the isocitrate and isopropylmalate dehydrogenases family. As to quaternary structure, heterooligomer of subunits alpha (IDH3A), beta (IDH3B), and gamma (IDH3G) in the apparent ratio of 2:1:1. The heterodimer containing one IDH3A and one IDH3B subunit and the heterodimer containing one IDH3A and one IDH3G subunit assemble into a heterotetramer (which contains two subunits of IDH3A, one of IDH3B and one of IDH3G) and further into the heterooctamer. Mg(2+) is required as a cofactor. The cofactor is Mn(2+).

It localises to the mitochondrion. The catalysed reaction is D-threo-isocitrate + NAD(+) = 2-oxoglutarate + CO2 + NADH. The heterotetramer and the heterodimer composed of IDH3A and IDH3G subunits can be allosterically activated by citrate (CIT) or/and ADP, and the two activators can act independently or synergistically. The heterodimer composed of IDH3A and IDH3B subunits cannot be allosterically regulated and the allosteric regulation of the heterotetramer is through the IDH3G subunit and not the IDH3B subunit. The IDH3G subunit contains the allosteric site which consists of a CIT-binding site and an ADP-binding site, and the binding of CIT and ADP causes conformational changes at the allosteric site which are transmitted to the active site in the catalytic subunit (IDH3A) through a cascade of conformational changes at the heterodimer interface, leading to stabilization of the isocitrate-binding at the active site and thus activation of the enzyme. ATP can activate the heterotetramer and the heterodimer composed of IDH3A and IDH3G subunits at low concentrations but inhibits their activities at high concentrations, whereas ATP exhibits only inhibitory effect on the heterodimer composed of IDH3A and IDH3B subunits. Catalytic subunit of the enzyme which catalyzes the decarboxylation of isocitrate (ICT) into alpha-ketoglutarate. The heterodimer composed of the alpha (IDH3A) and beta (IDH3B) subunits and the heterodimer composed of the alpha (IDH3A) and gamma (IDH3G) subunits, have considerable basal activity but the full activity of the heterotetramer (containing two subunits of IDH3A, one of IDH3B and one of IDH3G) requires the assembly and cooperative function of both heterodimers. In Macaca fascicularis (Crab-eating macaque), this protein is Isocitrate dehydrogenase [NAD] subunit alpha, mitochondrial (IDH3A).